Consider the following 155-residue polypeptide: RING finger protein 122 (155 aa).

Residues 40–60 (VIFGTGIFVFMLSLIFCCYFI) traverse the membrane as a helical segment. The segment at 93–134 (CAVCLEDFKGKDELGVLPCQHAFHRKCLVKWLEVRCVCPMCN) adopts an RING-type; atypical zinc-finger fold.

As to expression, widely expressed in several tissues and cell lines.

The protein localises to the golgi apparatus. Its subcellular location is the endoplasmic reticulum. It is found in the membrane. In terms of biological role, may induce necrosis and apoptosis. May play a role in cell viability. The polypeptide is RING finger protein 122 (RNF122) (Homo sapiens (Human)).